A 308-amino-acid polypeptide reads, in one-letter code: Mycothiol acetyltransferase (308 aa).

A disordered region spans residues 1–20; it reads MTSDDTAQPSGARRIETRPD. 2 N-acetyltransferase domains span residues 15-152 and 165-308; these read IETR…RSLT and VTVR…RSET. E47 contacts 1D-myo-inositol 2-(L-cysteinylamino)-2-deoxy-alpha-D-glucopyranoside. 91 to 93 is an acetyl-CoA binding site; that stretch reads LVV. Positions 192, 231, and 240 each coordinate 1D-myo-inositol 2-(L-cysteinylamino)-2-deoxy-alpha-D-glucopyranoside. Residues 244–246 and 251–257 each bind acetyl-CoA; these read VGV and QGGGLGK. A 1D-myo-inositol 2-(L-cysteinylamino)-2-deoxy-alpha-D-glucopyranoside-binding site is contributed by Y278.

Belongs to the acetyltransferase family. MshD subfamily. As to quaternary structure, monomer.

It carries out the reaction 1D-myo-inositol 2-(L-cysteinylamino)-2-deoxy-alpha-D-glucopyranoside + acetyl-CoA = mycothiol + CoA + H(+). Catalyzes the transfer of acetyl from acetyl-CoA to desacetylmycothiol (Cys-GlcN-Ins) to form mycothiol. The protein is Mycothiol acetyltransferase of Streptomyces scabiei (strain 87.22).